The sequence spans 219 residues: Putative protease Do-like 6, chloroplastic (219 aa).

The transit peptide at 1–45 (MLFRSVHHIVARFSNSTSTPIHRFFYSPSLLRRRSSFNASLISRC) directs the protein to the chloroplast. The tract at residues 61–216 (KIFSFSREPN…YSGQINKKIY (156 aa)) is serine protease. Residues His-99, Asp-130, and Ser-208 each act as charge relay system in the active site.

This sequence belongs to the peptidase S1B family.

It localises to the plastid. Its subcellular location is the chloroplast. Putative serine protease. The chain is Putative protease Do-like 6, chloroplastic (DEGP6) from Arabidopsis thaliana (Mouse-ear cress).